A 303-amino-acid polypeptide reads, in one-letter code: Trans-enoyl reductase tazE (303 aa).

The interval 1-26 is disordered; sequence MTAEHDAAILPKPGGPLAVGKRATPE. NADP(+) is bound at residue 44–49; that stretch reads CDYYQR. 136–143 contacts substrate; that stretch reads LAVLTALT. NADP(+)-binding positions include 170-173, 193-196, Tyr211, and 246-247; these read SSSV, SPKH, and LD. A substrate-binding site is contributed by 265–269; sequence VLPEC.

The protein belongs to the zinc-containing alcohol dehydrogenase family.

Its pathway is secondary metabolite biosynthesis. In terms of biological role, trans-enoyl reductase; part of the gene cluster that mediates the biosynthesis of azaterrilone A and other azaphilones, a class of fungal metabolites characterized by a highly oxygenated pyrano-quinone bicyclic core and exhibiting a broad range of bioactivities. The first step of the pathway begins with the non-reducing polyketide synthase tazA that assembles one acetyl-CoA starter unit, five malonyl-CoA units, and catalyzes a series of Claisen condensations, methylation, PT-mediated cyclization, and finally releases the first hexaketide precursor through the R-domain. The tazA product then undergoes reduction on its terminal ketone and the following pyran-ring formation by yet undetermined enzyme(s). Dehydration and enoyl reduction, possibly involving the trans-enoyl reductase tazE leads to the next intermediate. TazD is predicted as an acetyltransferase and might catalyze the acetylation steps leading to the synthesis of azaterrilone A. Azaterrilone A is not the final product of the taz pathway and both the highly reducing polyketide synthase tazB and the dual enzyme tazHJ catalyze late steps of the pathway, leading to the production of the 2 final stereoisomers that contain additional polyketide modification whose structures have still to be determined. In Aspergillus terreus (strain NIH 2624 / FGSC A1156), this protein is Trans-enoyl reductase tazE.